The following is a 249-amino-acid chain: 14-3-3-like protein D (249 aa).

Belongs to the 14-3-3 family.

This Nicotiana tabacum (Common tobacco) protein is 14-3-3-like protein D.